Here is a 275-residue protein sequence, read N- to C-terminus: MAVKTYKPYTPSRRFMSNLSSSDITGKASVKSLLIKLPVSAGRNNNGRITSRHKEGGAKKFYRIIDFKRNKFNIQGKVAAIEYDPYRNCRIALIHYVDGEKRYIIQPSGLKVGDVVFSASSGLDIKTGFAMKLKSMPIGTIVHNIEMHPGAGGALARSAGTSAQIMGREGKYIILRMPSGEMRYILEECMATIGVVGNEDFANISIGKAGRNRHRGIRPQTRGSAMNPVDHPHGGGEGKTGSSGHPVSPWGTPAKGFKTRKKKASDKLIISRKKK.

Residues 210-275 (GRNRHRGIRP…DKLIISRKKK (66 aa)) form a disordered region. The span at 257-275 (FKTRKKKASDKLIISRKKK) shows a compositional bias: basic residues.

The protein belongs to the universal ribosomal protein uL2 family. In terms of assembly, part of the 50S ribosomal subunit. Forms a bridge to the 30S subunit in the 70S ribosome.

Its function is as follows. One of the primary rRNA binding proteins. Required for association of the 30S and 50S subunits to form the 70S ribosome, for tRNA binding and peptide bond formation. It has been suggested to have peptidyltransferase activity; this is somewhat controversial. Makes several contacts with the 16S rRNA in the 70S ribosome. In Helicobacter hepaticus (strain ATCC 51449 / 3B1), this protein is Large ribosomal subunit protein uL2.